Here is a 932-residue protein sequence, read N- to C-terminus: Protocadherin gamma-A3 (932 aa).

Residues 1 to 29 (MTNCLSFRNGRGLALLCALLGTLCETGSG) form the signal peptide. Cadherin domains follow at residues 30–133 (QIRY…APNF), 134–242 (PTEE…PPMF), 243–347 (TQPE…APEI), 348–452 (TITS…PPTF), 453–562 (PHLS…APEI), and 570–682 (DGST…EPSA). Over 30 to 692 (QIRYSVSEEL…KPNDSDLTLY (663 aa)) the chain is Extracellular. Asparagine 265, asparagine 419, and asparagine 545 each carry an N-linked (GlcNAc...) asparagine glycan. Asparagine 685 is a glycosylation site (N-linked (GlcNAc...) asparagine). The chain crosses the membrane as a helical span at residues 693–713 (LVVAVAAVSCVFLAFVIVLLA). Residues 714–932 (LRLRRWHKSR…KKKSGKKEKK (219 aa)) are Cytoplasmic-facing. Disordered stretches follow at residues 805–841 (NLLQQAPPNTDWRFSQAQRPGTSGSQNGDDTGTWPNN) and 902–932 (ATLTNAAGKRDGKAPAGGNGNKKKSGKKEKK). Basic residues predominate over residues 922–932 (NKKKSGKKEKK).

It localises to the cell membrane. Functionally, potential calcium-dependent cell-adhesion protein. May be involved in the establishment and maintenance of specific neuronal connections in the brain. The chain is Protocadherin gamma-A3 (PCDHGA3) from Homo sapiens (Human).